The sequence spans 183 residues: Abscisic acid receptor PYL10 (183 aa).

The interval 20 to 172 is START-like; sequence HELVESQCSS…NLNSLADVTE (153 aa). A disulfide bridge links Cys27 with Cys153. Residues Lys56, 85–90, 112–118, and Glu137 contribute to the abscisate site; these read ATKSTE and RLKNYSS. The Gate loop motif lies at 81-85; the sequence is SGLPA. A Latch loop motif is present at residues 111 to 113; that stretch reads HRL.

Belongs to the PYR/PYL/RCAR abscisic acid intracellular receptor family. As to quaternary structure, monomer. Forms heterodimer with PYL13, thus antagonizing PP2Cs-binding and ABA-independent inhibition of PP2Cs. Homodimer. Binds ABA on one subunit only. Binds to CARs protein in an ABA-independent manner, both at the plasma membrane and in the nucleus. Interacts with ABI1 and HAB1, and possibly with other PP2Cs, in an ABA-independent manner.

It is found in the cytoplasm. Its subcellular location is the nucleus. The protein localises to the cell membrane. Its function is as follows. Receptor for abscisic acid (ABA) required for ABA-mediated responses such as stomatal closure and germination inhibition. Inhibits the activity of group-A protein phosphatases type 2C (PP2Cs) in an ABA-independent manner but more efficiently when activated by ABA. Can be activated by both (-)-ABA and (+)-ABA. This chain is Abscisic acid receptor PYL10 (PYL10), found in Arabidopsis thaliana (Mouse-ear cress).